Consider the following 340-residue polypeptide: rRNA adenine N-6-methyltransferase (340 aa).

Low complexity predominate over residues 1–25 (MAGPQDRPRGRGPSSGRPQRPVGGR). A disordered region spans residues 1–37 (MAGPQDRPRGRGPSSGRPQRPVGGRSQRDRDRRVLGQ). The S-adenosyl-L-methionine site is built by N38, L40, G65, E86, D111, and A127. Residues 284–340 (RGGAARGPGDQRGRRGRPGGGPRPDGRAGGGPRRDAGGRRTGDGRGGRPRPPRGGQA) form a disordered region. Positions 301-314 (PGGGPRPDGRAGGG) are enriched in gly residues. Positions 315–329 (PRRDAGGRRTGDGRG) are enriched in basic and acidic residues.

Belongs to the class I-like SAM-binding methyltransferase superfamily. rRNA adenine N(6)-methyltransferase family.

Its function is as follows. Involved in erythromycin resistance. This chain is rRNA adenine N-6-methyltransferase (ermA), found in Aeromicrobium erythreum (strain ATCC 51598 / DSM 8599 / JCM 8359 / NBRC 15406 / NRRL B-3381).